The chain runs to 407 residues: Tyrosine--tRNA ligase 1 (407 aa).

Residue Tyr-35 coordinates L-tyrosine. Residues 40–49 carry the 'HIGH' region motif; it reads PTGDSLHVGH. L-tyrosine is bound by residues Tyr-168 and Gln-172. The 'KMSKS' region signature appears at 228-232; sequence KMGKT. Residue Lys-231 coordinates ATP. Residues 340–406 enclose the S4 RNA-binding domain; that stretch reads SSILDVLVHT…GKKKYYKIVI (67 aa).

This sequence belongs to the class-I aminoacyl-tRNA synthetase family. TyrS type 1 subfamily. As to quaternary structure, homodimer.

Its subcellular location is the cytoplasm. The catalysed reaction is tRNA(Tyr) + L-tyrosine + ATP = L-tyrosyl-tRNA(Tyr) + AMP + diphosphate + H(+). Its function is as follows. Catalyzes the attachment of tyrosine to tRNA(Tyr) in a two-step reaction: tyrosine is first activated by ATP to form Tyr-AMP and then transferred to the acceptor end of tRNA(Tyr). This is Tyrosine--tRNA ligase 1 from Clostridium acetobutylicum (strain ATCC 824 / DSM 792 / JCM 1419 / IAM 19013 / LMG 5710 / NBRC 13948 / NRRL B-527 / VKM B-1787 / 2291 / W).